The following is a 586-amino-acid chain: Arginine--tRNA ligase (586 aa).

The short motif at 131–141 is the 'HIGH' region element; it reads ANPTGPMHVGH.

It belongs to the class-I aminoacyl-tRNA synthetase family. Monomer.

Its subcellular location is the cytoplasm. It carries out the reaction tRNA(Arg) + L-arginine + ATP = L-arginyl-tRNA(Arg) + AMP + diphosphate. The protein is Arginine--tRNA ligase of Rhizobium rhizogenes (strain K84 / ATCC BAA-868) (Agrobacterium radiobacter).